Reading from the N-terminus, the 336-residue chain is Protein-arginine kinase (336 aa).

In terms of domain architecture, Phosphagen kinase C-terminal spans 22–245 (IVMSSRIRLA…QQIINEEMQI (224 aa)). ATP contacts are provided by residues 25–29 (SSRIR), His83, Arg116, 167–171 (RASVM), and 198–203 (RGIYGE).

The protein belongs to the ATP:guanido phosphotransferase family.

The enzyme catalyses L-arginyl-[protein] + ATP = N(omega)-phospho-L-arginyl-[protein] + ADP + H(+). Its function is as follows. Catalyzes the specific phosphorylation of arginine residues in proteins. In Staphylococcus saprophyticus subsp. saprophyticus (strain ATCC 15305 / DSM 20229 / NCIMB 8711 / NCTC 7292 / S-41), this protein is Protein-arginine kinase.